The chain runs to 382 residues: Per os infectivity factor 2 (382 aa).

In terms of assembly, forms the PIF complex together with PIF1 and PIF3. The complex also interacts with per os infectivity factor PIF0.

Functionally, per os infectivity factor that mediates the specific binding of occluded virions (ODV) to the host midgut target cells. The protein is Per os infectivity factor 2 of Autographa californica nuclear polyhedrosis virus (AcMNPV).